The following is a 115-amino-acid chain: Large ribosomal subunit protein bL19 (115 aa).

Belongs to the bacterial ribosomal protein bL19 family.

Functionally, this protein is located at the 30S-50S ribosomal subunit interface and may play a role in the structure and function of the aminoacyl-tRNA binding site. In Streptococcus pyogenes serotype M2 (strain MGAS10270), this protein is Large ribosomal subunit protein bL19.